We begin with the raw amino-acid sequence, 215 residues long: Cytochrome b6 (215 aa).

The Cytoplasmic segment spans residues 1 to 31 (MANVYDWFQERLEIQALADDVTSKYVPPHVN). Residues 32-52 (IFYCLGGITLTCFLIQFATGF) form a helical membrane-spanning segment. C35 lines the heme c pocket. Over 53-89 (AMTFYYKPTVTEAYASVQYIMNEVSFGWLIRSIHRWS) the chain is Lumenal, thylakoid. 4 residues coordinate heme b: R83, H86, H100, and R103. The helical transmembrane segment at 90–110 (ASMMVLMMILHVFRVYLTGGF) threads the bilayer. The Cytoplasmic portion of the chain corresponds to 111-115 (KKPRE). Residues 116–136 (LTWISGVILAVITVSFGVTGY) form a helical membrane-spanning segment. At 137–185 (SLPWDQVGYWAVKIVSGVPEAIPVVGVLISDLLRGGSSVGQATLTRYYS) the chain is on the lumenal, thylakoid side. Residues 186 to 206 (AHTFVLPWLIAVFMLLHFLMI) form a helical membrane-spanning segment. Positions 187 and 202 each coordinate heme b. Residues 207-215 (RKQGISGPL) lie on the Cytoplasmic side of the membrane. Heme c is bound at residue K208.

This sequence belongs to the cytochrome b family. PetB subfamily. The 4 large subunits of the cytochrome b6-f complex are cytochrome b6, subunit IV (17 kDa polypeptide, PetD), cytochrome f and the Rieske protein, while the 4 small subunits are PetG, PetL, PetM and PetN. The complex functions as a dimer. Heme b serves as cofactor. The cofactor is heme c.

The protein resides in the cellular thylakoid membrane. Component of the cytochrome b6-f complex, which mediates electron transfer between photosystem II (PSII) and photosystem I (PSI), cyclic electron flow around PSI, and state transitions. The sequence is that of Cytochrome b6 from Mastigocladus laminosus (Fischerella sp.).